The sequence spans 211 residues: Ribonuclease P protein component 3 (211 aa).

The protein belongs to the eukaryotic/archaeal RNase P protein component 3 family. In terms of assembly, consists of a catalytic RNA component and at least 4-5 protein subunits.

It is found in the cytoplasm. It catalyses the reaction Endonucleolytic cleavage of RNA, removing 5'-extranucleotides from tRNA precursor.. In terms of biological role, part of ribonuclease P, a protein complex that generates mature tRNA molecules by cleaving their 5'-ends. In Aeropyrum pernix (strain ATCC 700893 / DSM 11879 / JCM 9820 / NBRC 100138 / K1), this protein is Ribonuclease P protein component 3.